We begin with the raw amino-acid sequence, 263 residues long: uncharacterized protein (263 aa).

7 helical membrane passes run Met1–Gln21, Leu38–Tyr58, Ile82–Val102, Gly118–Tyr138, Gly151–Leu171, Phe196–Thr216, and Phe230–Val250.

The protein resides in the membrane. This is an uncharacterized protein from Saccharomyces cerevisiae (strain ATCC 204508 / S288c) (Baker's yeast).